Here is a 198-residue protein sequence, read N- to C-terminus: ATP-dependent Clp protease proteolytic subunit 1 (198 aa).

Ser98 functions as the Nucleophile in the catalytic mechanism. His123 is a catalytic residue.

This sequence belongs to the peptidase S14 family. Fourteen ClpP subunits assemble into 2 heptameric rings which stack back to back to give a disk-like structure with a central cavity, resembling the structure of eukaryotic proteasomes.

The protein localises to the cytoplasm. The enzyme catalyses Hydrolysis of proteins to small peptides in the presence of ATP and magnesium. alpha-casein is the usual test substrate. In the absence of ATP, only oligopeptides shorter than five residues are hydrolyzed (such as succinyl-Leu-Tyr-|-NHMec, and Leu-Tyr-Leu-|-Tyr-Trp, in which cleavage of the -Tyr-|-Leu- and -Tyr-|-Trp bonds also occurs).. Cleaves peptides in various proteins in a process that requires ATP hydrolysis. Has a chymotrypsin-like activity. Plays a major role in the degradation of misfolded proteins. ClpXP1 is involved in the complete degradation of the Site-2 clipped anti-sigma-W factor RsiW. This results in the release of SigW and the transcription activation of the genes under the control of the sigma-W factor. The sequence is that of ATP-dependent Clp protease proteolytic subunit 1 from Bacillus licheniformis (strain ATCC 14580 / DSM 13 / JCM 2505 / CCUG 7422 / NBRC 12200 / NCIMB 9375 / NCTC 10341 / NRRL NRS-1264 / Gibson 46).